The following is a 204-amino-acid chain: ATP-dependent Clp protease proteolytic subunit (204 aa).

The Nucleophile role is filled by serine 102. Histidine 127 is a catalytic residue.

It belongs to the peptidase S14 family. Fourteen ClpP subunits assemble into 2 heptameric rings which stack back to back to give a disk-like structure with a central cavity, resembling the structure of eukaryotic proteasomes.

The protein localises to the cytoplasm. It carries out the reaction Hydrolysis of proteins to small peptides in the presence of ATP and magnesium. alpha-casein is the usual test substrate. In the absence of ATP, only oligopeptides shorter than five residues are hydrolyzed (such as succinyl-Leu-Tyr-|-NHMec, and Leu-Tyr-Leu-|-Tyr-Trp, in which cleavage of the -Tyr-|-Leu- and -Tyr-|-Trp bonds also occurs).. Functionally, cleaves peptides in various proteins in a process that requires ATP hydrolysis. Has a chymotrypsin-like activity. Plays a major role in the degradation of misfolded proteins. The protein is ATP-dependent Clp protease proteolytic subunit of Neisseria gonorrhoeae (strain ATCC 700825 / FA 1090).